A 390-amino-acid polypeptide reads, in one-letter code: Probable galacturonosyltransferase-like 9 (390 aa).

Residues 1–10 (MRLRFPMKSA) are Cytoplasmic-facing. The helical; Signal-anchor for type II membrane protein transmembrane segment at 11–31 (VLAFAIFLVFIPLFSVGIRMI) threads the bilayer. Residues 32 to 390 (PGRLTAVSAT…SELTEDSSFF (359 aa)) are Lumenal-facing. N-linked (GlcNAc...) asparagine glycans are attached at residues Asn205 and Asn223.

This sequence belongs to the glycosyltransferase 8 family.

The protein localises to the golgi apparatus membrane. It participates in glycan metabolism; pectin biosynthesis. May be involved in pectin and/or xylans biosynthesis in cell walls. This chain is Probable galacturonosyltransferase-like 9 (GATL9), found in Arabidopsis thaliana (Mouse-ear cress).